The primary structure comprises 236 residues: MTRRYWNINLEEMMEAGVHFGHGTRKWNPRMAPYISAKRKGIHITNLTRTARFLSEACDLLFDAASRGKQFLIVGTKNKAADLVASAAIRARCHYVNKKWLGGMSTNWSTTETRLHKFRDLRAEQKTARLARLPKRDAAMLKRQLSHLQTYLGGIKYMTRLPDIVIIVDQQEEYTAIRECVTLGIPMICLIDTNCDPDLADISIPANDDAIASIRLILNKLVSAICEGRSSYIRNR.

Belongs to the universal ribosomal protein uS2 family.

Its subcellular location is the plastid. The protein localises to the chloroplast. The chain is Small ribosomal subunit protein uS2c (rps2) from Buxus microphylla (Littleleaf boxwood).